The primary structure comprises 357 residues: Cytoplasmic tRNA 2-thiolation protein 1 (357 aa).

The segment at 314–348 is disordered; the sequence is GVSRTRGRRGEKAGLHPDVGRGGGGGSSGPAEVAS. The span at 321–332 shows a compositional bias: basic and acidic residues; the sequence is RRGEKAGLHPDV.

This sequence belongs to the TtcA family. CTU1/NCS6/ATPBD3 subfamily.

It localises to the cytoplasm. It functions in the pathway tRNA modification; 5-methoxycarbonylmethyl-2-thiouridine-tRNA biosynthesis. Its function is as follows. Plays a central role in 2-thiolation of mcm(5)S(2)U at tRNA wobble positions of tRNA(Lys), tRNA(Glu) and tRNA(Gln). Directly binds tRNAs and probably acts by catalyzing adenylation of tRNAs, an intermediate required for 2-thiolation. It is unclear whether it acts as a sulfurtransferase that transfers sulfur from thiocarboxylated URM1 onto the uridine of tRNAs at wobble position. This chain is Cytoplasmic tRNA 2-thiolation protein 1, found in Chlamydomonas reinhardtii (Chlamydomonas smithii).